The following is a 1205-amino-acid chain: U2 snRNP component prp10 (1205 aa).

3 disordered regions span residues glutamine 39–glutamine 58, tyrosine 122–tyrosine 175, and glycine 202–arginine 254. The span at lysine 44–glutamine 58 shows a compositional bias: polar residues. Basic and acidic residues predominate over residues methionine 130 to arginine 153. 16 HEAT repeats span residues leucine 393–alanine 429, alanine 431–histidine 473, isoleucine 475–serine 505, glycine 506–leucine 540, glycine 541–cysteine 578, proline 582–proline 619, histidine 665–valine 702, valine 745–valine 782, proline 828–alanine 865, proline 912–glutamate 949, arginine 954–proline 991, aspartate 993–cysteine 1024, methionine 1025–glutamate 1061, aspartate 1065–glycine 1102, aspartate 1107–isoleucine 1142, and glycine 1143–aspartate 1179.

Belongs to the SF3B1 family. Belongs to the 40S cdc5-associated complex (or cwf complex), a spliceosome sub-complex reminiscent of a late-stage spliceosome composed of the U2, U5 and U6 snRNAs and at least brr2, cdc5, cwf2/prp3, cwf3/syf1, cwf4/syf3, cwf5/ecm2, spp42/cwf6, cwf7/spf27, cwf8, cwf9, cwf10, cwf11, cwf12, prp45/cwf13, cwf14, cwf15, cwf16, cwf17, cwf18, cwf19, cwf20, cwf21, cwf22, cwf23, cwf24, cwf25, cwf26, cyp7/cwf27, cwf28, cwf29/ist3, lea1, msl1, prp5/cwf1, prp10, prp12/sap130, prp17, prp22, sap61, sap62, sap114, sap145, slu7, smb1, smd1, smd3, smf1, smg1 and syf2.

The protein resides in the nucleus. Its function is as follows. Contacts pre-mRNA on both sides of the branch site early in spliceosome assembly. This chain is U2 snRNP component prp10 (prp10), found in Schizosaccharomyces pombe (strain 972 / ATCC 24843) (Fission yeast).